The primary structure comprises 483 residues: Glutarate-semialdehyde dehydrogenase (483 aa).

Residues 156–157 (WN), 180–183 (KPAS), and 233–234 (GS) contribute to the NADP(+) site. E255 serves as the catalytic Proton acceptor. L256 lines the NADP(+) pocket. The active-site Nucleophile is the C289. Position 386 (E386) interacts with NADP(+).

This sequence belongs to the aldehyde dehydrogenase family.

It catalyses the reaction 5-oxopentanoate + NADP(+) + H2O = glutarate + NADPH + 2 H(+). It functions in the pathway amino-acid degradation. Catalyzes the conversion of 5-oxopentanoate (glutarate semialdehyde) to glutarate. Involved in L-lysine degradation. In Pseudomonas aeruginosa (strain ATCC 15692 / DSM 22644 / CIP 104116 / JCM 14847 / LMG 12228 / 1C / PRS 101 / PAO1), this protein is Glutarate-semialdehyde dehydrogenase.